Reading from the N-terminus, the 356-residue chain is tRNA-specific 2-thiouridylase MnmA (356 aa).

ATP is bound at residue 6–13; sequence AVSGGTDS. The active-site Nucleophile is the C95. An intrachain disulfide couples C95 to C195. Position 119 (G119) interacts with ATP. Residues 145–147 are interaction with tRNA; sequence KDQ. The active-site Cysteine persulfide intermediate is the C195. The interaction with tRNA stretch occupies residues 300-301; that stretch reads RY.

Belongs to the MnmA/TRMU family.

It localises to the cytoplasm. It catalyses the reaction S-sulfanyl-L-cysteinyl-[protein] + uridine(34) in tRNA + AH2 + ATP = 2-thiouridine(34) in tRNA + L-cysteinyl-[protein] + A + AMP + diphosphate + H(+). In terms of biological role, catalyzes the 2-thiolation of uridine at the wobble position (U34) of tRNA, leading to the formation of s(2)U34. This chain is tRNA-specific 2-thiouridylase MnmA, found in Oleidesulfovibrio alaskensis (strain ATCC BAA-1058 / DSM 17464 / G20) (Desulfovibrio alaskensis).